The following is a 331-amino-acid chain: Methionyl-tRNA formyltransferase (331 aa).

110-113 (SLLP) serves as a coordination point for (6S)-5,6,7,8-tetrahydrofolate. Positions 312–331 (HAPAERVSAAGSPAGAGGAP) are disordered.

Belongs to the Fmt family.

The catalysed reaction is L-methionyl-tRNA(fMet) + (6R)-10-formyltetrahydrofolate = N-formyl-L-methionyl-tRNA(fMet) + (6S)-5,6,7,8-tetrahydrofolate + H(+). Attaches a formyl group to the free amino group of methionyl-tRNA(fMet). The formyl group appears to play a dual role in the initiator identity of N-formylmethionyl-tRNA by promoting its recognition by IF2 and preventing the misappropriation of this tRNA by the elongation apparatus. The chain is Methionyl-tRNA formyltransferase from Frankia alni (strain DSM 45986 / CECT 9034 / ACN14a).